A 117-amino-acid chain; its full sequence is Hydrogenase maturation factor HypA (117 aa).

His2 is a binding site for Ni(2+). Zn(2+) contacts are provided by Cys73, Cys76, Cys89, and Cys92.

This sequence belongs to the HypA/HybF family.

Its function is as follows. Involved in the maturation of [NiFe] hydrogenases. Required for nickel insertion into the metal center of the hydrogenase. The sequence is that of Hydrogenase maturation factor HypA from Chlorobium luteolum (strain DSM 273 / BCRC 81028 / 2530) (Pelodictyon luteolum).